A 444-amino-acid polypeptide reads, in one-letter code: MVVIKDIVAREILDSRGNPTIEVDVSTEGGVFRAAVPSGASTGIYEALELRDKDPKRYLGKGVLNAVEIVRQEIKPALLGKDPCDQKGIDMLMVEQLDGTKNEWGYSKSKLGANAILGVSIACCRAGAASKGLPLYKYIATLAGKTIDKMVMPVPFFNVINGGEHAGNGLALQEFLIAPVGAPNIREAIRYGSETYHHLKNVIKNKYGLDATNVGDEGGFAPNVATAEEALNLLVEAIKAAGYEGKIKIAFDAAASEFYKQDEKKYDLDYKCKTKNASKHLTGEKLKEVYEGWLKKYPIISVEDPFDQDDFASFSAFTKDVGEKTQVIGDDILVTNILRIEKALKDKACNCLLLKVNQIGSVTEAIEACLLAQKSGWGVQVSHRSGETEDSFIADLVVGLRCGQIKSGSPCRSERLCKYNQLMRIEESLGADCVYAGESFRHPK.

Substrate-binding residues include histidine 165 and glutamate 174. The active-site Proton donor is glutamate 217. Residues glutamate 303 and aspartate 330 each contribute to the substrate site. Residue lysine 355 is the Proton acceptor of the active site. Substrate contacts are provided by residues 382–385 (SHRS) and lysine 406.

Belongs to the enolase family. In terms of assembly, homodimer. It depends on Mg(2+) as a cofactor.

Its subcellular location is the cytoplasm. The catalysed reaction is (2R)-2-phosphoglycerate = phosphoenolpyruvate + H2O. The protein operates within carbohydrate degradation; glycolysis; pyruvate from D-glyceraldehyde 3-phosphate: step 4/5. The sequence is that of Enolase 1 (ENO1) from Toxoplasma gondii.